The sequence spans 589 residues: Complement component C8 beta chain (589 aa).

Positions Met1–Gly31 are cleaved as a signal peptide. Positions Gly32–Arg53 are excised as a propeptide. An N-linked (GlcNAc...) asparagine glycan is attached at Asn43. The TSP type-1 1 domain occupies Asp63–Arg116. Disulfide bonds link Cys64/Cys99, Cys75/Cys109, Cys78/Cys115, Cys121/Cys132, Cys126/Cys145, Cys139/Cys154, and Cys161/Cys199. 2 C-linked (Man) tryptophan glycosylation sites follow: Trp69 and Trp72. Residues Arg120–Arg155 enclose the LDL-receptor class A domain. Ca(2+) contacts are provided by Leu137, Asn140, Asp142, Asp144, Asp150, and Glu151. One can recognise an MACPF domain in the interval Ile157–Arg503. The next 8 beta stranded transmembrane spans lie at Pro201–Asp206, Phe209–Tyr213, Phe251–Lys258, Gly261–Lys268, Ser328–Leu335, Asp338–Phe343, Ala378–Gly385, and Val391–Ser398. The cysteines at positions 377 and 402 are disulfide-linked. Residues Asp404–Glu534 enclose the EGF-like domain. Thr417 bears the Phosphothreonine mark. 4 cysteine pairs are disulfide-bonded: Cys502–Cys549, Cys504–Cys520, Cys507–Cys522, and Cys524–Cys533. The region spanning Asp544–Leu587 is the TSP type-1 2 domain. Residues Trp550 and Trp553 are each glycosylated (C-linked (Man) tryptophan). A disulfide bridge connects residues Cys556 and Cys589. Residues Pro570–Cys589 form a disordered region.

It belongs to the complement C6/C7/C8/C9 family. In terms of assembly, heterotrimer of 3 chains: alpha (C8A), beta (C8B) and gamma (C8G); the alpha and gamma chains are disulfide bonded. Component of the membrane attack complex (MAC), composed of complement C5b, C6, C7, C8A, C8B, C8G and multiple copies of the pore-forming subunit C9. N-glycosylated; contains one or two bound glycans. Not O-glycosylated.

It localises to the secreted. Its subcellular location is the target cell membrane. Its activity is regulated as follows. Membrane attack complex (MAC) assembly is inhibited by CD59, thereby protecting self-cells from damage during complement activation. CD59 acts by binding to the beta-haipins of C8 (C8A and C8B), forming an intermolecular beta-sheet that prevents incorporation of the multiple copies of C9 required for complete formation of the osmolytic pore. MAC assembly is also inhibited by clusterin (CLU) chaperones that inhibit polymerization of C9. Component of the membrane attack complex (MAC), a multiprotein complex activated by the complement cascade, which inserts into a target cell membrane and forms a pore, leading to target cell membrane rupture and cell lysis. The MAC is initiated by proteolytic cleavage of C5 into complement C5b in response to the classical, alternative, lectin and GZMK complement pathways. The complement pathways consist in a cascade of proteins that leads to phagocytosis and breakdown of pathogens and signaling that strengthens the adaptive immune system. C8B, together with C8A and C8G, inserts into the target membrane, but does not form pores by itself. During MAC assembly, associates with C5b, C6 and C7 to form the C5b8 intermediate complex that inserts into the target membrane and traverses the bilayer increasing membrane rigidity. In Mus musculus (Mouse), this protein is Complement component C8 beta chain (C8b).